We begin with the raw amino-acid sequence, 63 residues long: Sperm protamine P1 (63 aa).

The segment at 1-63 (MARYRRHSRS…RYSRRGRRRY (63 aa)) is disordered.

Belongs to the protamine P1 family. In terms of tissue distribution, testis.

It localises to the nucleus. The protein resides in the chromosome. In terms of biological role, protamines substitute for histones in the chromatin of sperm during the haploid phase of spermatogenesis. They compact sperm DNA into a highly condensed, stable and inactive complex. The polypeptide is Sperm protamine P1 (PRM1) (Sminthopsis bindi (Kakadu dunnart)).